The chain runs to 263 residues: Proteasome subunit beta type-5 (263 aa).

A propeptide spans 1-59 (MALASVLERPLPVNQRGFFGLGGRADLLDLGPGSLSDGLSLAAPGWGVPEEPGIEMLHG) (removed in mature form). The active-site Nucleophile is the Thr-60. Ala-108 is a bortezomib binding site.

The protein belongs to the peptidase T1B family. The 26S proteasome consists of a 20S proteasome core and two 19S regulatory subunits. The 20S proteasome core is a barrel-shaped complex made of 28 subunits that are arranged in four stacked rings. The two outer rings are each formed by seven alpha subunits, and the two inner rings are formed by seven beta subunits. The proteolytic activity is exerted by three beta-subunits PSMB5, PSMB6 and PSMB7. Directly interacts with POMP. Interacts with ABCB1 and TAP1. In terms of assembly, (Microbial infection) Interacts with HIV-1 TAT protein.

The protein localises to the cytoplasm. The protein resides in the nucleus. The enzyme catalyses Cleavage of peptide bonds with very broad specificity.. Functionally, component of the 20S core proteasome complex involved in the proteolytic degradation of most intracellular proteins. This complex plays numerous essential roles within the cell by associating with different regulatory particles. Associated with two 19S regulatory particles, forms the 26S proteasome and thus participates in the ATP-dependent degradation of ubiquitinated proteins. The 26S proteasome plays a key role in the maintenance of protein homeostasis by removing misfolded or damaged proteins that could impair cellular functions, and by removing proteins whose functions are no longer required. Associated with the PA200 or PA28, the 20S proteasome mediates ubiquitin-independent protein degradation. This type of proteolysis is required in several pathways including spermatogenesis (20S-PA200 complex) or generation of a subset of MHC class I-presented antigenic peptides (20S-PA28 complex). Within the 20S core complex, PSMB5 displays a chymotrypsin-like activity. This is Proteasome subunit beta type-5 from Homo sapiens (Human).